Consider the following 1649-residue polypeptide: Formin-like protein 20 (1649 aa).

The Phosphatase tensin-type domain occupies 1–194; the sequence is MALFRRFFYK…QYISRRNLGS (194 aa). C127 serves as the catalytic Phosphocysteine intermediate. Residues 200 to 339 enclose the C2 tensin-type domain; the sequence is DTPLLLDCLI…FKAEVLFSGA (140 aa). Disordered stretches follow at residues 416 to 774 and 787 to 1245; these read DCAS…PWKS and STSQ…QKKS. Residues 421 to 483 show a composition bias toward basic and acidic residues; sequence DSNHKHDMHA…RRTVEAKEND (63 aa). 2 stretches are compositionally biased toward polar residues: residues 500 to 513 and 585 to 597; these read LESM…SLNK and RINS…TTSL. Residues 598 to 616 show a composition bias toward basic and acidic residues; that stretch reads KDGKRATSPDGVIPKDAKT. Residues 648–662 are compositionally biased toward pro residues; that stretch reads SLPPASPHQAPPPLP. Residues 665 to 678 are compositionally biased toward polar residues; sequence TSEAKTVLHSSQAV. 5 stretches are compositionally biased toward pro residues: residues 680-691, 701-711, 722-732, 743-752, and 795-804; these read SPPPPPPPPPLP, LPPPPPPPPPF, LPPPPPPPLP, and SPTPPPPPPA. Polar residues predominate over residues 809–820; it reads GQKSSDLQTSQL. Composition is skewed to pro residues over residues 821–832, 843–854, and 865–874; these read PSPPPPPPPPPF, LPPPPPPPPPPF, and LPPPPPPPPW. The span at 878-890 shows a compositional bias: polar residues; sequence YASTFETHEACST. Composition is skewed to pro residues over residues 893-904, 944-960, and 968-1213; these read SPPPPPPPPPFS, PSPP…PPPF, and SPPP…PPPM. In terms of domain architecture, FH2 spans 1237–1635; that stretch reads FGSAAQKKSS…KALKEAEMEK (399 aa).

This sequence belongs to the formin-like family. Class-II subfamily.

The polypeptide is Formin-like protein 20 (FH20) (Arabidopsis thaliana (Mouse-ear cress)).